Here is a 2036-residue protein sequence, read N- to C-terminus: Proline-rich protein 12 (2036 aa).

3 disordered regions span residues 210–283 (GGGV…RALP), 331–587 (CSPL…GAPG), and 649–697 (APSP…DPQR). Positions 223 to 240 (QTPPYRPGPPDPPPPPRH) are enriched in pro residues. Positions 249-258 (ASSSAAAAAA) are enriched in low complexity. Phosphoserine occurs at positions 332 and 340. The span at 340-365 (SPGAGEPSKAGPSGATAGASGRATGP) shows a compositional bias: low complexity. 2 stretches are compositionally biased toward gly residues: residues 367–380 (AAGG…GGGY) and 391–400 (TGKGGYGAAA). Composition is skewed to low complexity over residues 411–432 (STAT…TGKA) and 441–458 (QAYS…QAYG). The segment covering 479–490 (PPQPPSGPPPPG) has biased composition (pro residues). Composition is skewed to polar residues over residues 493–504 (TCQSYSPDQLQG) and 523–537 (GLPT…STGH). Residues 543 to 558 (GHGGGWGPSSLGGGGE) show a composition bias toward gly residues. A Phosphoserine modification is found at S651. Residues 673–683 (GLGGSGGAGGP) show a composition bias toward gly residues. Position 738 is a phosphothreonine (T738). 4 disordered regions span residues 758 to 850 (AFLQ…PLQL), 859 to 878 (LEPA…DPPG), 886 to 925 (ALEP…KAPR), and 952 to 1068 (EMFG…CSTK). The span at 802–817 (LPSVLSHAPSPSPSAS) shows a compositional bias: low complexity. Pro residues predominate over residues 833–847 (PQPPPPPPPPPPPMP). Position 865 is a phosphoserine (S865). The span at 1037 to 1052 (AAPPPPPPPPPPPAPA) shows a compositional bias: pro residues. 2 positions are modified to phosphoserine: S1077 and S1135. Disordered stretches follow at residues 1120 to 1260 (RLPD…SLTR), 1294 to 1347 (RHPP…GGAL), 1376 to 1573 (TLPS…GEGI), and 1668 to 1840 (HRPP…PGRL). The span at 1182 to 1194 (PTTAGPASASTPT) shows a compositional bias: low complexity. The segment covering 1199–1208 (KPRGRGRGRG) has biased composition (basic residues). Over residues 1209–1223 (RKAEEAGGTRLEPLK) the composition is skewed to basic and acidic residues. K1223 bears the N6-acetyllysine mark. A compositionally biased stretch (polar residues) spans 1239 to 1257 (GTSSGDAISGTDHNSLDSS). Residue T1304 is modified to Phosphothreonine. 2 stretches are compositionally biased toward pro residues: residues 1306 to 1317 (PLSPPKSVPPSV) and 1324 to 1338 (PQPP…PPPS). S1308 carries the phosphoserine modification. Residues S1381, S1382, and S1387 each carry the phosphoserine modification. 2 stretches are compositionally biased toward pro residues: residues 1420–1438 (DGPP…PLPG) and 1458–1535 (PPTP…APSP). The segment covering 1541–1553 (PDTRPLHLAKKQE) has biased composition (basic and acidic residues). A Phosphothreonine modification is found at T1561. S1568 is modified (phosphoserine). The segment covering 1691-1703 (APPPKAPAPPPKP) has biased composition (pro residues). Composition is skewed to basic and acidic residues over residues 1704–1715 (ETPEKTTSEKPP) and 1737–1769 (PVEK…RPER). T1705 carries the phosphothreonine modification. Low complexity predominate over residues 1817–1829 (GSSSDSESSPGAP). S1925 is modified (phosphoserine).

It localises to the nucleus. The protein resides in the postsynaptic density. It is found in the synapse. Its subcellular location is the synaptosome. This Homo sapiens (Human) protein is Proline-rich protein 12.